The chain runs to 363 residues: 3-isopropylmalate dehydrogenase (363 aa).

78 to 91 lines the NAD(+) pocket; it reads GPKWENLPPESQPE. Substrate contacts are provided by Arg99, Arg109, Arg138, and Asp227. 3 residues coordinate Mg(2+): Asp227, Asp251, and Asp255. 285–297 lines the NAD(+) pocket; the sequence is GSAPDIAGKNIAN.

Belongs to the isocitrate and isopropylmalate dehydrogenases family. LeuB type 1 subfamily. As to quaternary structure, homodimer. Requires Mg(2+) as cofactor. The cofactor is Mn(2+).

The protein localises to the cytoplasm. The catalysed reaction is (2R,3S)-3-isopropylmalate + NAD(+) = 4-methyl-2-oxopentanoate + CO2 + NADH. Its pathway is amino-acid biosynthesis; L-leucine biosynthesis; L-leucine from 3-methyl-2-oxobutanoate: step 3/4. In terms of biological role, catalyzes the oxidation of 3-carboxy-2-hydroxy-4-methylpentanoate (3-isopropylmalate) to 3-carboxy-4-methyl-2-oxopentanoate. The product decarboxylates to 4-methyl-2 oxopentanoate. In Salmonella paratyphi A (strain ATCC 9150 / SARB42), this protein is 3-isopropylmalate dehydrogenase.